The following is a 380-amino-acid chain: Erythronate-4-phosphate dehydrogenase (380 aa).

Positions 45 and 66 each coordinate substrate. NAD(+)-binding positions include 126 to 127, Asp146, Thr175, 206 to 208, and Asp232; these read QV and ASR. Residue Arg208 is part of the active site. Glu237 is a catalytic residue. His254 serves as the catalytic Proton donor. Gly257 provides a ligand contact to NAD(+). Tyr258 lines the substrate pocket.

It belongs to the D-isomer specific 2-hydroxyacid dehydrogenase family. PdxB subfamily. As to quaternary structure, homodimer.

The protein resides in the cytoplasm. It catalyses the reaction 4-phospho-D-erythronate + NAD(+) = (R)-3-hydroxy-2-oxo-4-phosphooxybutanoate + NADH + H(+). It functions in the pathway cofactor biosynthesis; pyridoxine 5'-phosphate biosynthesis; pyridoxine 5'-phosphate from D-erythrose 4-phosphate: step 2/5. Functionally, catalyzes the oxidation of erythronate-4-phosphate to 3-hydroxy-2-oxo-4-phosphonooxybutanoate. The polypeptide is Erythronate-4-phosphate dehydrogenase (Pseudomonas aeruginosa (strain UCBPP-PA14)).